The sequence spans 368 residues: Methionine import ATP-binding protein MetN (368 aa).

The span at 1–14 shows a compositional bias: polar residues; sequence MASDAQPSVDQPSA. A disordered region spans residues 1–27; it reads MASDAQPSVDQPSAGTPGATGNSTGTT. The span at 15–27 shows a compositional bias: low complexity; the sequence is GTPGATGNSTGTT. Residues 31–270 enclose the ABC transporter domain; the sequence is IVFRDVTKIF…PQTKTAANFV (240 aa). Residue 67–74 coordinates ATP; that stretch reads GYSGAGKS.

The protein belongs to the ABC transporter superfamily. Methionine importer (TC 3.A.1.24) family. In terms of assembly, the complex is composed of two ATP-binding proteins (MetN), two transmembrane proteins (MetI) and a solute-binding protein (MetQ).

It is found in the cell membrane. The catalysed reaction is L-methionine(out) + ATP + H2O = L-methionine(in) + ADP + phosphate + H(+). It catalyses the reaction D-methionine(out) + ATP + H2O = D-methionine(in) + ADP + phosphate + H(+). Its function is as follows. Part of the ABC transporter complex MetNIQ involved in methionine import. Responsible for energy coupling to the transport system. This is Methionine import ATP-binding protein MetN from Corynebacterium jeikeium (strain K411).